A 255-amino-acid polypeptide reads, in one-letter code: 4-hydroxy-tetrahydrodipicolinate reductase (255 aa).

Residues 9–14, Asp35, 89–91, and 115–118 contribute to the NAD(+) site; these read GFKGKM, GTT, and APNF. His145 acts as the Proton donor/acceptor in catalysis. His146 contributes to the (S)-2,3,4,5-tetrahydrodipicolinate binding site. Lys149 (proton donor) is an active-site residue. Position 155–156 (155–156) interacts with (S)-2,3,4,5-tetrahydrodipicolinate; sequence GT.

Belongs to the DapB family.

Its subcellular location is the cytoplasm. It carries out the reaction (S)-2,3,4,5-tetrahydrodipicolinate + NAD(+) + H2O = (2S,4S)-4-hydroxy-2,3,4,5-tetrahydrodipicolinate + NADH + H(+). The enzyme catalyses (S)-2,3,4,5-tetrahydrodipicolinate + NADP(+) + H2O = (2S,4S)-4-hydroxy-2,3,4,5-tetrahydrodipicolinate + NADPH + H(+). Its pathway is amino-acid biosynthesis; L-lysine biosynthesis via DAP pathway; (S)-tetrahydrodipicolinate from L-aspartate: step 4/4. Catalyzes the conversion of 4-hydroxy-tetrahydrodipicolinate (HTPA) to tetrahydrodipicolinate. The chain is 4-hydroxy-tetrahydrodipicolinate reductase from Streptococcus pneumoniae serotype 19F (strain G54).